A 309-amino-acid chain; its full sequence is ATP-dependent Clp protease proteolytic subunit 3, chloroplastic (309 aa).

A chloroplast-targeting transit peptide spans 1-70; sequence MEMSLRLASS…WDVSSFSIDS (70 aa). The residue at position 71 (Val-71) is an N-acetylvaline. The Nucleophile role is filled by Ser-164. The active site involves His-189. Phosphothreonine is present on Thr-194. A disordered region spans residues 290–309; that stretch reads DNTNLPSERSMTQNGYAAIE. A compositionally biased stretch (polar residues) spans 292 to 309; that stretch reads TNLPSERSMTQNGYAAIE.

The protein belongs to the peptidase S14 family. Component of the chloroplastic Clp protease core complex which consist of at least 16 proteins: CLPP4 (3 copies), CLPP5 (3 copies), CLPR4 (2 copies), ClpP1 (1 copy), CLPP6 (1 copy), CLPR2 (1 copy), CLPT1 (1 copy), CLPT2 (1 copy) and 3 copies of CLPP3 and/or CLPR1 and/or CLPR3. The core complex is organized in two heptameric rings, one containing CLPP3,4,5,6 in a 1:2:3:1 ratio and the other CLPP1 and CLPR1,2,3,4 in a 3:1:1:1:1 ratio. Interacts with CHIP. In terms of processing, ubiquitinated in vitro by CHIP. As to expression, mostly expressed in leaves. Also detected in stems, and to a lower extent, in roots (at protein level).

It is found in the plastid. The protein localises to the chloroplast stroma. It carries out the reaction Hydrolysis of proteins to small peptides in the presence of ATP and magnesium. alpha-casein is the usual test substrate. In the absence of ATP, only oligopeptides shorter than five residues are hydrolyzed (such as succinyl-Leu-Tyr-|-NHMec, and Leu-Tyr-Leu-|-Tyr-Trp, in which cleavage of the -Tyr-|-Leu- and -Tyr-|-Trp bonds also occurs).. In terms of biological role, cleaves peptides in various proteins in a process that requires ATP hydrolysis. Has a chymotrypsin-like activity. Plays a major role in the degradation of misfolded proteins. In the absence of CLPP3, modified ClpPR core(s) could be formed, albeit at strongly reduced levels. In Arabidopsis thaliana (Mouse-ear cress), this protein is ATP-dependent Clp protease proteolytic subunit 3, chloroplastic.